A 447-amino-acid polypeptide reads, in one-letter code: Methylenetetrahydrofolate--tRNA-(uracil-5-)-methyltransferase TrmFO (447 aa).

13–18 (GAGLAG) provides a ligand contact to FAD.

It belongs to the MnmG family. TrmFO subfamily. FAD is required as a cofactor.

It is found in the cytoplasm. It catalyses the reaction uridine(54) in tRNA + (6R)-5,10-methylene-5,6,7,8-tetrahydrofolate + NADH + H(+) = 5-methyluridine(54) in tRNA + (6S)-5,6,7,8-tetrahydrofolate + NAD(+). The catalysed reaction is uridine(54) in tRNA + (6R)-5,10-methylene-5,6,7,8-tetrahydrofolate + NADPH + H(+) = 5-methyluridine(54) in tRNA + (6S)-5,6,7,8-tetrahydrofolate + NADP(+). Functionally, catalyzes the folate-dependent formation of 5-methyl-uridine at position 54 (M-5-U54) in all tRNAs. The chain is Methylenetetrahydrofolate--tRNA-(uracil-5-)-methyltransferase TrmFO from Streptococcus thermophilus (strain ATCC BAA-250 / LMG 18311).